The following is a 61-amino-acid chain: Short neurotoxin 4 (61 aa).

Disulfide bonds link Cys3/Cys23, Cys17/Cys40, Cys42/Cys53, and Cys54/Cys59.

Belongs to the three-finger toxin family. Short-chain subfamily. Type I alpha-neurotoxin sub-subfamily. As to expression, expressed by the venom gland.

The protein resides in the secreted. Binds to muscle nicotinic acetylcholine receptor (nAChR) and inhibit acetylcholine from binding to the receptor, thereby impairing neuromuscular transmission. This chain is Short neurotoxin 4, found in Naja annulifera (Banded Egyptian cobra).